Here is a 214-residue protein sequence, read N- to C-terminus: QETSAKLADTEETLQETSAKLADTEETLQETSAKLADTEETLQETSAKLADTEETLSAEIASLAEQHGVAQTLCEQQGAYMNQLLTYVRAAYNVTLDGMTEVQATAVADILRQCDYALRSVAQAASDEVEHVKEMYNMVDGNYKETAARFDILRRILGKIDQDVKEASVEIDAPERRQTCSLHPTPRRLGDVSNRENSIENKTRSASRLSGRLF.

Repeat copies occupy residues 1 to 14 (QETSAKLADTEETL), 15 to 28 (QETSAKLADTEETL), 29 to 42 (QETSAKLADTEETL), and 43 to 56 (QETSAKLADTEETL). The tract at residues 1 to 31 (QETSAKLADTEETLQETSAKLADTEETLQET) is disordered. Positions 1-56 (QETSAKLADTEETLQETSAKLADTEETLQETSAKLADTEETLQETSAKLADTEETL) are 4 X 14 AA tandem repeats. The segment at 180-214 (CSLHPTPRRLGDVSNRENSIENKTRSASRLSGRLF) is disordered. Basic and acidic residues predominate over residues 188 to 203 (RLGDVSNRENSIENKT).

The protein resides in the membrane. The chain is Membrane antigen containing repeating peptides from Leishmania major.